We begin with the raw amino-acid sequence, 1072 residues long: Carbamoyl phosphate synthase large chain (1072 aa).

The interval 1–401 (MPKRLDINTI…SLLKAVRSLE (401 aa)) is carboxyphosphate synthetic domain. Residues Arg129, Arg169, Gly175, Gly176, Lys208, Ile210, Glu215, Gly241, Val242, His243, Gln284, and Glu298 each coordinate ATP. The ATP-grasp 1 domain maps to 133-327 (RTLMQELNEP…IAKLAAKIAV (195 aa)). 3 residues coordinate Mg(2+): Gln284, Glu298, and Asn300. 3 residues coordinate Mn(2+): Gln284, Glu298, and Asn300. The interval 402–546 (LGIYHLELDH…YSTYADENEL (145 aa)) is oligomerization domain. The carbamoyl phosphate synthetic domain stretch occupies residues 547–929 (IVTDRKSVVV…ALYKGLVASG (383 aa)). Residues 671 to 861 (EAALTKLGIP…MANVATKVIL (191 aa)) enclose the ATP-grasp 2 domain. ATP contacts are provided by Arg707, Arg746, Glu752, Gly777, Val778, His779, Ser780, Gln820, and Glu832. 3 residues coordinate Mg(2+): Gln820, Glu832, and Asn834. Gln820, Glu832, and Asn834 together coordinate Mn(2+). An MGS-like domain is found at 930-1072 (INIPTHGSVI…QTKRHEVVHA (143 aa)). Residues 930–1072 (INIPTHGSVI…QTKRHEVVHA (143 aa)) form an allosteric domain region.

Belongs to the CarB family. In terms of assembly, composed of two chains; the small (or glutamine) chain promotes the hydrolysis of glutamine to ammonia, which is used by the large (or ammonia) chain to synthesize carbamoyl phosphate. Tetramer of heterodimers (alpha,beta)4. The cofactor is Mg(2+). Mn(2+) is required as a cofactor.

It carries out the reaction hydrogencarbonate + L-glutamine + 2 ATP + H2O = carbamoyl phosphate + L-glutamate + 2 ADP + phosphate + 2 H(+). The enzyme catalyses hydrogencarbonate + NH4(+) + 2 ATP = carbamoyl phosphate + 2 ADP + phosphate + 2 H(+). The protein operates within amino-acid biosynthesis; L-arginine biosynthesis; carbamoyl phosphate from bicarbonate: step 1/1. It participates in pyrimidine metabolism; UMP biosynthesis via de novo pathway; (S)-dihydroorotate from bicarbonate: step 1/3. Its function is as follows. Large subunit of the glutamine-dependent carbamoyl phosphate synthetase (CPSase). CPSase catalyzes the formation of carbamoyl phosphate from the ammonia moiety of glutamine, carbonate, and phosphate donated by ATP, constituting the first step of 2 biosynthetic pathways, one leading to arginine and/or urea and the other to pyrimidine nucleotides. The large subunit (synthetase) binds the substrates ammonia (free or transferred from glutamine from the small subunit), hydrogencarbonate and ATP and carries out an ATP-coupled ligase reaction, activating hydrogencarbonate by forming carboxy phosphate which reacts with ammonia to form carbamoyl phosphate. The chain is Carbamoyl phosphate synthase large chain from Bacillus anthracis (strain A0248).